Reading from the N-terminus, the 438-residue chain is Probable tRNA pseudouridine synthase D (438 aa).

The active-site Nucleophile is Asp86. Positions 165 to 390 (GVPNFFGIQR…SKGTRRELLL (226 aa)) constitute a TRUD domain.

Belongs to the pseudouridine synthase TruD family.

It carries out the reaction uridine(13) in tRNA = pseudouridine(13) in tRNA. In terms of biological role, could be responsible for synthesis of pseudouridine from uracil-13 in transfer RNAs. In Methanosarcina barkeri (strain Fusaro / DSM 804), this protein is Probable tRNA pseudouridine synthase D.